Reading from the N-terminus, the 237-residue chain is Putative N-acetylmannosamine-6-phosphate 2-epimerase (237 aa).

This sequence belongs to the NanE family.

The enzyme catalyses an N-acyl-D-glucosamine 6-phosphate = an N-acyl-D-mannosamine 6-phosphate. It functions in the pathway amino-sugar metabolism; N-acetylneuraminate degradation; D-fructose 6-phosphate from N-acetylneuraminate: step 3/5. Its function is as follows. Converts N-acetylmannosamine-6-phosphate (ManNAc-6-P) to N-acetylglucosamine-6-phosphate (GlcNAc-6-P). The sequence is that of Putative N-acetylmannosamine-6-phosphate 2-epimerase from Listeria monocytogenes serotype 4a (strain HCC23).